Here is a 193-residue protein sequence, read N- to C-terminus: CASP-like protein 1F3 (193 aa).

A disordered region spans residues methionine 1 to serine 25. The Cytoplasmic portion of the chain corresponds to methionine 1–glutamine 35. Residues isoleucine 36–alanine 56 form a helical membrane-spanning segment. Residues lysine 57–lysine 78 are Extracellular-facing. A helical transmembrane segment spans residues phenylalanine 79–tryptophan 99. Residues proline 100 to aspartate 118 lie on the Cytoplasmic side of the membrane. A helical transmembrane segment spans residues methionine 119–serine 139. Residues glutamine 140–glutamine 161 are Extracellular-facing. A helical transmembrane segment spans residues methionine 162–leucine 182. Topologically, residues serine 183 to glutamate 193 are cytoplasmic.

It belongs to the Casparian strip membrane proteins (CASP) family. As to quaternary structure, homodimer and heterodimers.

It localises to the cell membrane. This is CASP-like protein 1F3 from Populus trichocarpa (Western balsam poplar).